Reading from the N-terminus, the 34-residue chain is Protein MgtT (34 aa).

Positions 1–34 are disordered; that stretch reads MNGDNPSPNRPLVTVVYKGPDFYDGEKKPPVNRR. Basic and acidic residues predominate over residues 24-34; that stretch reads DGEKKPPVNRR.

This is Protein MgtT from Escherichia coli (strain K12).